A 589-amino-acid polypeptide reads, in one-letter code: Probable 9-cis-epoxycarotenoid dioxygenase NCED5, chloroplastic (589 aa).

Residues 1–45 constitute a chloroplast transit peptide; sequence MACSYILTPNPTKLNLSFAPSDLDAPSPSSSVSFTNTKPRRRKLS. Low complexity predominate over residues 21 to 34; the sequence is SDLDAPSPSSSVSF. Residues 21–51 form a disordered region; it reads SDLDAPSPSSSVSFTNTKPRRRKLSANSVSD. Fe cation contacts are provided by His-287, His-336, His-401, and His-576.

Belongs to the carotenoid oxygenase family. Interacts in vitro with VAR3. Fe(2+) is required as a cofactor. Detected only in seeds.

The protein localises to the plastid. The protein resides in the chloroplast thylakoid membrane. The enzyme catalyses a 9-cis-epoxycarotenoid + O2 = a 12'-apo-carotenal + 2-cis,4-trans-xanthoxin. It carries out the reaction 9-cis-violaxanthin + O2 = (3S,5R,6S)-5,6-epoxy-3-hydroxy-5,6-dihydro-12'-apo-beta-caroten-12'-al + 2-cis,4-trans-xanthoxin. The catalysed reaction is 9'-cis-neoxanthin + O2 = (3S,5R,6R)-3,5-dihydroxy-6,7-didehydro-5,6-dihydro-12'-apo-beta-caroten-12'-al + 2-cis,4-trans-xanthoxin. Its function is as follows. Has a 11,12(11',12') 9-cis epoxycarotenoid cleavage activity. Catalyzes the first step of abscisic-acid biosynthesis from carotenoids. This chain is Probable 9-cis-epoxycarotenoid dioxygenase NCED5, chloroplastic (NCED5), found in Arabidopsis thaliana (Mouse-ear cress).